Consider the following 278-residue polypeptide: Pantothenate synthetase (278 aa).

Met-30 to His-37 contacts ATP. His-37 acts as the Proton donor in catalysis. Position 61 (Gln-61) interacts with (R)-pantoate. Gln-61 is a binding site for beta-alanine. Gly-147–Asp-150 provides a ligand contact to ATP. Gln-153 serves as a coordination point for (R)-pantoate. ATP-binding positions include Val-176 and Leu-184 to Arg-187.

It belongs to the pantothenate synthetase family. In terms of assembly, homodimer.

The protein localises to the cytoplasm. It carries out the reaction (R)-pantoate + beta-alanine + ATP = (R)-pantothenate + AMP + diphosphate + H(+). Its pathway is cofactor biosynthesis; (R)-pantothenate biosynthesis; (R)-pantothenate from (R)-pantoate and beta-alanine: step 1/1. In terms of biological role, catalyzes the condensation of pantoate with beta-alanine in an ATP-dependent reaction via a pantoyl-adenylate intermediate. This is Pantothenate synthetase from Thermosipho africanus (strain TCF52B).